Reading from the N-terminus, the 137-residue chain is 5-hydroxyisourate hydrolase (137 aa).

The first 23 residues, 1–23 (MLKRYLVLSVVTAAFSLPSLVYA), serve as a signal peptide directing secretion. The substrate site is built by H32, R70, and Y134.

This sequence belongs to the transthyretin family. 5-hydroxyisourate hydrolase subfamily. In terms of assembly, homotetramer.

The protein resides in the periplasm. It carries out the reaction 5-hydroxyisourate + H2O = 5-hydroxy-2-oxo-4-ureido-2,5-dihydro-1H-imidazole-5-carboxylate + H(+). In terms of biological role, catalyzes the hydrolysis of 5-hydroxyisourate (HIU) to 2-oxo-4-hydroxy-4-carboxy-5-ureidoimidazoline (OHCU). The chain is 5-hydroxyisourate hydrolase (hiuH) from Escherichia coli O157:H7.